Consider the following 140-residue polypeptide: Cystatin-C (140 aa).

The signal sequence occupies residues 1–20 (MASPLRSLLFLLAVLAVAWA). The Secondary area of contact motif lies at 75 to 79 (QLVAG). Intrachain disulfides connect cysteine 93/cysteine 103 and cysteine 117/cysteine 137.

The protein belongs to the cystatin family.

The protein localises to the secreted. Its function is as follows. As an inhibitor of cysteine proteinases, this protein is thought to serve an important physiological role as a local regulator of this enzyme activity. This Mus musculus (Mouse) protein is Cystatin-C (Cst3).